A 369-amino-acid chain; its full sequence is Ferredoxin--NADP reductase 2 (369 aa).

A disordered region spans residues 1–23; sequence MDLSIPNPVADTTKQVDGGSPAG. FAD is bound by residues Asp58, Gln66, Tyr71, Val111, Phe146, Asp311, and Thr352.

This sequence belongs to the ferredoxin--NADP reductase type 2 family. Homodimer. FAD serves as cofactor.

It catalyses the reaction 2 reduced [2Fe-2S]-[ferredoxin] + NADP(+) + H(+) = 2 oxidized [2Fe-2S]-[ferredoxin] + NADPH. The sequence is that of Ferredoxin--NADP reductase 2 from Cupriavidus necator (strain ATCC 17699 / DSM 428 / KCTC 22496 / NCIMB 10442 / H16 / Stanier 337) (Ralstonia eutropha).